The primary structure comprises 178 residues: Fatty-acid and retinol-binding protein 1 (178 aa).

An N-terminal signal peptide occupies residues 1 to 16; it reads MYHQLILMALIGVIMA. Residues Asn44 and Asn75 are each glycosylated (N-linked (GlcNAc...) asparagine). Coiled coils occupy residues 67–89 and 123–154; these read DAAL…ELRN and KLDM…LKAT. Residue Asn157 is glycosylated (N-linked (GlcNAc...) asparagine).

The protein belongs to the fatty-acid and retinol-binding protein (FARBP) family. N-glycosylated.

Its subcellular location is the secreted. In terms of biological role, binds retinol and different fatty acids. The polypeptide is Fatty-acid and retinol-binding protein 1 (Onchocerca gutturosa).